We begin with the raw amino-acid sequence, 179 residues long: Adenine phosphoribosyltransferase (179 aa).

It belongs to the purine/pyrimidine phosphoribosyltransferase family. As to quaternary structure, homodimer.

Its subcellular location is the cytoplasm. It catalyses the reaction AMP + diphosphate = 5-phospho-alpha-D-ribose 1-diphosphate + adenine. The protein operates within purine metabolism; AMP biosynthesis via salvage pathway; AMP from adenine: step 1/1. Functionally, catalyzes a salvage reaction resulting in the formation of AMP, that is energically less costly than de novo synthesis. This Haemophilus ducreyi (strain 35000HP / ATCC 700724) protein is Adenine phosphoribosyltransferase.